We begin with the raw amino-acid sequence, 92 residues long: MARSLKKGPFVADKLMKKIELLHSKGEKTVIQTWSRSSTITPIMIGHTIAVHNGREHIPVFVTDQMVGHKLGEFSPTRTFRGHVKSDKKSKR.

It belongs to the universal ribosomal protein uS19 family.

The protein resides in the plastid. It is found in the chloroplast. Protein S19 forms a complex with S13 that binds strongly to the 16S ribosomal RNA. The chain is Small ribosomal subunit protein uS19c from Ostreococcus tauri.